The primary structure comprises 2184 residues: Chromodomain-helicase-DNA-binding protein 8 (2184 aa).

Disordered regions lie at residues 379–399 (VKTS…KQEK) and 419–527 (IPRV…KRKK). The span at 387-399 (ESRKLDSQKKQEK) shows a compositional bias: basic and acidic residues. Over residues 425–437 (EDELPSVNPEDDD) the composition is skewed to acidic residues. The segment covering 448–459 (GETSDRSKDEKP) has biased composition (basic and acidic residues). Basic residues predominate over residues 516–527 (KRRSNRQVKRKK). Chromo domains lie at 586 to 653 (AIVD…TQMQ) and 668 to 734 (VEVD…RVAR). The region spanning 767–941 (LFNWYNRQNC…FSLLHFLEPT (175 aa)) is the Helicase ATP-binding domain. Residue 780 to 787 (DEMGLGKT) coordinates ATP. The short motif at 892-895 (DEAH) is the DEAH box element. The Helicase C-terminal domain maps to 1081-1252 (LIDKLLPKLR…FTKKEIEDLL (172 aa)). Disordered stretches follow at residues 1907 to 1989 (GISG…EESR) and 2039 to 2076 (WSSP…PAPD). Low complexity-rich tracts occupy residues 1912–1961 (SRPS…SNSE) and 2040–2054 (SSPR…DSPD).

The protein belongs to the SNF2/RAD54 helicase family. CHD8 subfamily. As to quaternary structure, component of some MLL1/MLL complex.

Its subcellular location is the nucleus. The enzyme catalyses ATP + H2O = ADP + phosphate + H(+). Its function is as follows. ATP-dependent chromatin-remodeling factor, it slides nucleosomes along DNA; nucleosome sliding requires ATP. Acts as a transcription repressor by remodeling chromatin structure and recruiting histone H1 to target genes. Suppresses p53/tp53-mediated apoptosis by recruiting histone H1 and preventing p53/tp53 transactivation activity. Acts as a negative regulator of Wnt signaling pathway by regulating beta-catenin (ctnnb1) activity. Negatively regulates ctnnb1-targeted gene expression by being recruited specifically to the promoter regions of several ctnnb1 responsive genes. May also act as a transcription activator by participating in efficient U6 RNA polymerase III transcription. This is Chromodomain-helicase-DNA-binding protein 8 from Xenopus tropicalis (Western clawed frog).